Here is a 405-residue protein sequence, read N- to C-terminus: MQVLNFYVNPYLNLSFDLLPVANHFCRYSRHWKMSRDITRPDELASLIQLQDRLQTQQDELFRKQQELQFRETYAGTGSTKSFTQGLIIGQLSVIILLGIFIKFFVFADSSTTSSTSGNGISSKTDVSNILVKRKKNGDGDAGSEGRSDEVDTILEKTYYDVDNHAPESLDWFNVLIAQTISSFRYEALQSDNIYHSLKEFLSKSELPDYLGDIQLTEIDIGDDFPIFSNCRIRPSKDSHGRLEAKIDVDLSDTLTMGIQTKLILNQPRPLTAVLPISLSVSIVRFSGCLTVSLINTNEEEFSEPRVAMDSPQSTRDDNSEEPNGTALLFSFSPDYRLEFNVKSLIGSRAKLQDVPKISSLIEHRLRSWFVERCIEPRFQVVKLPSLWPRKKNTRQPVSTTESDH.

The Lumenal segment spans residues 1–86 (MQVLNFYVNP…TGSTKSFTQG (86 aa)). A helical transmembrane segment spans residues 87–107 (LIIGQLSVIILLGIFIKFFVF). At 108-405 (ADSSTTSSTS…QPVSTTESDH (298 aa)) the chain is on the cytoplasmic side. Residues 166 to 385 (APESLDWFNV…EPRFQVVKLP (220 aa)) form the SMP-LTD domain. Positions 303 to 324 (SEPRVAMDSPQSTRDDNSEEPN) are disordered.

This sequence belongs to the MMM1 family. In terms of assembly, homodimer. Component of the ER-mitochondria encounter structure (ERMES) or MDM complex, composed of MMM1, MDM10, MDM12 and MDM34. An MMM1 homodimer associates with one molecule of MDM12 on each side in a pairwise head-to-tail manner, and the SMP-LTD domains of MMM1 and MDM12 generate a continuous hydrophobic tunnel for phospholipid trafficking.

Its subcellular location is the endoplasmic reticulum membrane. Its function is as follows. Component of the ERMES/MDM complex, which serves as a molecular tether to connect the endoplasmic reticulum (ER) and mitochondria. Components of this complex are involved in the control of mitochondrial shape and protein biogenesis, and function in nonvesicular lipid trafficking between the ER and mitochondria. The MDM12-MMM1 subcomplex functions in the major beta-barrel assembly pathway that is responsible for biogenesis of all outer membrane beta-barrel proteins, and acts in a late step after the SAM complex. The MDM10-MDM12-MMM1 subcomplex further acts in the TOM40-specific pathway after the action of the MDM12-MMM1 complex. Essential for establishing and maintaining the structure of mitochondria and maintenance of mtDNA nucleoids. This chain is Maintenance of mitochondrial morphology protein 1, found in Meyerozyma guilliermondii (strain ATCC 6260 / CBS 566 / DSM 6381 / JCM 1539 / NBRC 10279 / NRRL Y-324) (Yeast).